The following is a 249-amino-acid chain: Sugar fermentation stimulation protein homolog (249 aa).

Belongs to the SfsA family.

The polypeptide is Sugar fermentation stimulation protein homolog (Synechococcus sp. (strain RCC307)).